The following is a 368-amino-acid chain: Saccharopine dehydrogenase [NAD(+), L-lysine-forming] (368 aa).

L-saccharopine is bound by residues Arg-18 and Lys-77. Residue Lys-77 is the Proton acceptor of the active site. Ser-85 carries the post-translational modification Phosphoserine. The active-site Proton donor is His-96. Gln-101 is an L-saccharopine binding site. Arg-130 provides a ligand contact to NAD(+). Residues Arg-131 and Phe-135 each contribute to the L-saccharopine site. Residues 203-204, Asp-227, Thr-231, Tyr-251, and Val-278 each bind NAD(+); that span reads GR. The cysteines at positions 205 and 249 are disulfide-linked. Residue 279–281 coordinates L-saccharopine; it reads SCD. 319-322 provides a ligand contact to NAD(+); that stretch reads IDHL.

Belongs to the AlaDH/PNT family. In terms of assembly, monomer.

The enzyme catalyses L-saccharopine + NAD(+) + H2O = L-lysine + 2-oxoglutarate + NADH + H(+). It functions in the pathway amino-acid biosynthesis; L-lysine biosynthesis via AAA pathway; L-lysine from L-alpha-aminoadipate (fungal route): step 3/3. In terms of biological role, catalyzes the NAD(+)-dependent cleavage of saccharopine to L-lysine and 2-oxoglutarate, the final step in the alpha-aminoadipate (AAA) pathway for lysin biosynthesis. In Schizosaccharomyces pombe (strain 972 / ATCC 24843) (Fission yeast), this protein is Saccharopine dehydrogenase [NAD(+), L-lysine-forming].